Here is a 118-residue protein sequence, read N- to C-terminus: Large ribosomal subunit protein bL17 (118 aa).

It belongs to the bacterial ribosomal protein bL17 family. Part of the 50S ribosomal subunit. Contacts protein L32.

The chain is Large ribosomal subunit protein bL17 from Phytoplasma australiense.